Reading from the N-terminus, the 262-residue chain is Protein N-terminal and lysine N-methyltransferase EFM7 (262 aa).

Residues tryptophan 59, 86 to 88, aspartate 108, tryptophan 143, and serine 171 contribute to the S-adenosyl-L-methionine site; that span reads GAA.

It belongs to the class I-like SAM-binding methyltransferase superfamily. EFM7 family.

The protein localises to the cytoplasm. Functionally, S-adenosyl-L-methionine-dependent protein methyltransferase that trimethylates the N-terminal glycine 'Gly-2' of elongation factor 1-alpha, before also catalyzing the mono- and dimethylation of 'Lys-3'. This is Protein N-terminal and lysine N-methyltransferase EFM7 from Candida albicans (strain SC5314 / ATCC MYA-2876) (Yeast).